A 330-amino-acid chain; its full sequence is Nodulation protein D 2 (330 aa).

An HTH lysR-type domain is found at 6 to 63; that stretch reads LDLNLLVALDALITERNLSSAARKINLSQPAMSAAVARLRKHFRDELFGMRGRELVLS. A DNA-binding region (H-T-H motif) is located at residues 23–42; sequence LSSAARKINLSQPAMSAAVA. The tract at residues 308 to 330 is disordered; the sequence is RVTSSPEDAEPPGHFVRSVSPLP.

The protein belongs to the LysR transcriptional regulatory family.

In terms of biological role, nodD regulates the expression of the nodABCFE genes which encode other nodulation proteins. NodD is also a negative regulator of its own expression. Binds flavonoids as inducers. The chain is Nodulation protein D 2 (nodD2) from Bradyrhizobium diazoefficiens (strain JCM 10833 / BCRC 13528 / IAM 13628 / NBRC 14792 / USDA 110).